A 508-amino-acid polypeptide reads, in one-letter code: Bestrophin-2 (508 aa).

The Cytoplasmic segment spans residues 1 to 31; the sequence is MTVTYTARVANARFGGFSQLLLLWRGSIYKL. Position 10 (Ala10) interacts with Ca(2+). Residues 32-51 traverse the membrane as a helical segment; it reads LWRELLCFLGLYMALSAAYR. The Extracellular segment spans residues 52 to 60; it reads FLLAEEQKR. The chain crosses the membrane as a helical span at residues 61–82; sequence YFEKLVIYCDQYASLIPVSFVL. Over 83 to 238 the chain is Cytoplasmic; it reads GFYVTLVVHR…WISIPLVYTQ (156 aa). A helical transmembrane segment spans residues 239-255; the sequence is VVTIAVYSYFLACLIGR. The Extracellular portion of the chain corresponds to 256–274; sequence QFLDPAQGYKDHTLDLCVP. A helical membrane pass occupies residues 275 to 288; it reads IFTLLQFFFYAGWL. The Cytoplasmic segment spans residues 289–508; that stretch reads KVAEQLINPF…PIGEEEESPA (220 aa). 4 residues coordinate Ca(2+): Gln293, Asn296, Asp301, and Asp304. The tract at residues 455–508 is disordered; sequence LREPELEPPACPEPPAPIPGPTPEPFTTVSIPGPRAPAPPWLPSPIGEEEESPA. Pro residues-rich tracts occupy residues 461 to 478 and 488 to 497; these read EPPACPEPPAPIPGPTPE and PRAPAPPWLP.

The protein belongs to the anion channel-forming bestrophin (TC 1.A.46) family. Calcium-sensitive chloride channel subfamily. As to quaternary structure, pentamer. Interacts with GLUL; this interaction tethers a fraction of GLUL to the membrane, causing a decrease of cytosolic glutamine synthase (GS) activity and inhibits the chloride channel activity of BEST2 by affecting the gating at the aperture in the absence of intracellular glutamate. In terms of tissue distribution, expressed in mucin-secreting colonic goblet cells.

It localises to the cell membrane. It is found in the basolateral cell membrane. It catalyses the reaction chloride(in) = chloride(out). The catalysed reaction is hydrogencarbonate(in) = hydrogencarbonate(out). It carries out the reaction L-glutamate(out) = L-glutamate(in). The enzyme catalyses iodide(out) = iodide(in). It catalyses the reaction L-glutamine(out) = L-glutamine(in). Its activity is regulated as follows. Chloride channel activity is allosterically inhibited by GLUL/glutamine synthase (GS) which affects the gating at the aperture in the absence of intracellular glutamate. Inhibitory effect of GLUL is relieved upon increasing of intracellular level of L-glutamate. Functionally, ligand-gated anion channel that allows the movement of anions across cell membranes when activated by calcium (Ca2+). Transports a large specter of anions, namely mediates the movement of chloride, L-glutamate and iodide. Calcium-binding triggers the dilation of the aperture, but calcium-dependent gating is only effective when the size of the passing anion is bigger than the closed aperture. Mediates the calcium-activated hydrogencarbonate movement and participates in colonic hydrogencarbonate secretion concomitant with mucin secretion. In non-pigmented epithelium (NPE), mediates the efflux of intracellular L-glutamate; binding of intracellular L-glutamate activates and open both the neck and the aperture of the channel, leading to L-glutamate exit promoting chloride influx movement from the extracellular side in trans. Also exhibits a directional permeability for intracellular glutamine, in a similar manner as for L-glutamate. The polypeptide is Bestrophin-2 (Mus musculus (Mouse)).